A 344-amino-acid polypeptide reads, in one-letter code: UDP-N-acetylglucosamine--N-acetylmuramyl-(pentapeptide) pyrophosphoryl-undecaprenol N-acetylglucosamine transferase (344 aa).

UDP-N-acetyl-alpha-D-glucosamine is bound by residues 9–11 (TGG), asparagine 118, arginine 157, serine 188, and glutamine 282.

Belongs to the glycosyltransferase 28 family. MurG subfamily.

Its subcellular location is the cell inner membrane. It carries out the reaction di-trans,octa-cis-undecaprenyl diphospho-N-acetyl-alpha-D-muramoyl-L-alanyl-D-glutamyl-meso-2,6-diaminopimeloyl-D-alanyl-D-alanine + UDP-N-acetyl-alpha-D-glucosamine = di-trans,octa-cis-undecaprenyl diphospho-[N-acetyl-alpha-D-glucosaminyl-(1-&gt;4)]-N-acetyl-alpha-D-muramoyl-L-alanyl-D-glutamyl-meso-2,6-diaminopimeloyl-D-alanyl-D-alanine + UDP + H(+). Its pathway is cell wall biogenesis; peptidoglycan biosynthesis. Functionally, cell wall formation. Catalyzes the transfer of a GlcNAc subunit on undecaprenyl-pyrophosphoryl-MurNAc-pentapeptide (lipid intermediate I) to form undecaprenyl-pyrophosphoryl-MurNAc-(pentapeptide)GlcNAc (lipid intermediate II). In Aquifex aeolicus (strain VF5), this protein is UDP-N-acetylglucosamine--N-acetylmuramyl-(pentapeptide) pyrophosphoryl-undecaprenol N-acetylglucosamine transferase.